Reading from the N-terminus, the 153-residue chain is Small ribosomal subunit protein uS5 (153 aa).

Residues 15 to 78 (FQEVVVNIGR…DDAFKNLIHV (64 aa)) form the S5 DRBM domain.

This sequence belongs to the universal ribosomal protein uS5 family. In terms of assembly, part of the 30S ribosomal subunit. Contacts proteins S4 and S8.

With S4 and S12 plays an important role in translational accuracy. In terms of biological role, located at the back of the 30S subunit body where it stabilizes the conformation of the head with respect to the body. This is Small ribosomal subunit protein uS5 from Helicobacter pylori (strain P12).